We begin with the raw amino-acid sequence, 411 residues long: UDP-N-acetylmuramoylalanine--D-glutamate ligase (411 aa).

92–98 (GTDGKST) provides a ligand contact to ATP.

The protein belongs to the MurCDEF family.

It is found in the cytoplasm. The catalysed reaction is UDP-N-acetyl-alpha-D-muramoyl-L-alanine + D-glutamate + ATP = UDP-N-acetyl-alpha-D-muramoyl-L-alanyl-D-glutamate + ADP + phosphate + H(+). It participates in cell wall biogenesis; peptidoglycan biosynthesis. Functionally, cell wall formation. Catalyzes the addition of glutamate to the nucleotide precursor UDP-N-acetylmuramoyl-L-alanine (UMA). The protein is UDP-N-acetylmuramoylalanine--D-glutamate ligase of Hydrogenobaculum sp. (strain Y04AAS1).